Consider the following 699-residue polypeptide: D-(-)-3-hydroxybutyrate oligomer hydrolase (699 aa).

The N-terminal stretch at 1–33 (MTAIRGGSRRAPGLALALLGGVLLGACHGDENA) is a signal peptide. Residue serine 311 is the Charge relay system of the active site.

It belongs to the D-(-)-3-hydroxybutyrate oligomer hydrolase family.

Its subcellular location is the secreted. It carries out the reaction (3R)-hydroxybutanoate dimer + H2O = 2 (R)-3-hydroxybutanoate + H(+). Its pathway is lipid metabolism; butanoate metabolism. Functionally, participates in the degradation of poly-3-hydroxybutyrate (PHB). It works downstream of poly(3-hydroxybutyrate) depolymerase, hydrolyzing D(-)-3-hydroxybutyrate oligomers of various length (3HB-oligomers) into 3HB-monomers. In Burkholderia mallei (strain ATCC 23344), this protein is D-(-)-3-hydroxybutyrate oligomer hydrolase.